Consider the following 463-residue polypeptide: Nitrate/nitrite antiporter NarK (463 aa).

At 1–37 the chain is on the cytoplasmic side; it reads MSHSSAPERATGAVITDWRPEDPAFWQQRGQRIASRN. The helical transmembrane segment at 38–59 threads the bilayer; it reads LWISVPCLLLAFCVWMLFSAVA. Residues 60 to 73 lie on the Periplasmic side of the membrane; that stretch reads VNLPKVGFNFTTDQ. A helical transmembrane segment spans residues 74-95; the sequence is LFMLTALPSVSGALLRVPYSFM. Residue Arg-89 participates in nitrate binding. Arg-89 lines the nitrite pocket. Topologically, residues 96-102 are cytoplasmic; sequence VPIFGGR. A helical transmembrane segment spans residues 103–122; sequence RWTAFSTGILIIPCVWLGFA. At 123-130 the chain is on the periplasmic side; sequence VQDTSTPY. A helical membrane pass occupies residues 131–151; the sequence is SVFIIISLLCGFAGANFASSM. Over 152 to 166 the chain is Cytoplasmic; the sequence is ANISFFFPKQKQGGA. The chain crosses the membrane as a helical span at residues 167 to 189; that stretch reads LGLNGGLGNMGVSVMQLVAPLVV. Asn-175 provides a ligand contact to nitrate. Residues 190–211 are Periplasmic-facing; sequence SLSIFAVFGSQGVKQPDGTELY. A helical membrane pass occupies residues 212-233; that stretch reads LANASWIWVPFLAIFTIAAWFG. The Cytoplasmic portion of the chain corresponds to 234 to 253; it reads MNDLATSKASIKEQLPVLKR. A helical transmembrane segment spans residues 254 to 281; it reads GHLWIMSLLYLATFGSFIGFSAGFAMLS. Tyr-263 contributes to the nitrate binding site. Tyr-263 lines the nitrite pocket. At 282 to 289 the chain is on the periplasmic side; that stretch reads KTQFPDVQ. Residues 290-312 traverse the membrane as a helical segment; that stretch reads ILQYAFFGPFIGALARSAGGALS. Over 313–316 the chain is Cytoplasmic; sequence DRLG. Residues 317 to 338 form a helical membrane-spanning segment; that stretch reads GTRVTLVNFILMAIFSGLLFLT. Topologically, residues 339–347 are periplasmic; sequence LPTDGQGGS. Residues 348-373 traverse the membrane as a helical segment; it reads FMAFFAVFLALFLTAGLGSGSTFQMI. At 374–405 the chain is on the cytoplasmic side; sequence SVIFRKLTMDRVKAEGGSDERAMREAATDTAA. The chain crosses the membrane as a helical span at residues 406–427; sequence ALGFISAIGAIGGFFIPKAFGS. Ser-411 lines the nitrate pocket. The Periplasmic portion of the chain corresponds to 428–435; it reads SLALTGSP. Residues 436-458 traverse the membrane as a helical segment; it reads VGAMKVFLIFYIACVVITWAVYG. Residues 459-463 lie on the Cytoplasmic side of the membrane; the sequence is RHSKK.

The protein belongs to the major facilitator superfamily. Nitrate/nitrite porter (TC 2.A.1.8) family.

It localises to the cell inner membrane. The catalysed reaction is nitrate(in) + nitrite(out) = nitrate(out) + nitrite(in). In terms of biological role, catalyzes nitrate uptake, nitrite uptake and nitrite export across the cytoplasmic membrane. Functions as a nitrate/nitrite exchanger, and protons are unlikely to be co-transported. This is Nitrate/nitrite antiporter NarK from Escherichia coli (strain K12).